We begin with the raw amino-acid sequence, 226 residues long: Protein transport protein sec20 (226 aa).

Residues 1–189 lie on the Cytoplasmic side of the membrane; it reads MADVLNALEE…IKSLKLSDRS (189 aa). The stretch at 53 to 75 forms a coiled coil; sequence LRYEKAVQEYIRLNRRYRNKIAS. Serine 97 bears the Phosphoserine mark. A helical; Anchor for type IV membrane protein membrane pass occupies residues 190 to 210; that stretch reads DYFLVVSGFGFFIFVVVYLLF. Residues 211–226 lie on the Lumenal side of the membrane; sequence KRIVWPILSMFLWFLR.

The protein belongs to the SEC20 family. Component of a SNARE complex consisting of ufe1, sec20, sec22 and use1. Interacts with tip20 through its cytoplasmic domain.

The protein localises to the endoplasmic reticulum membrane. In terms of biological role, SNARE required for targeting and fusion of Golgi-derived retrograde transport vesicles with the ER. This chain is Protein transport protein sec20, found in Schizosaccharomyces pombe (strain 972 / ATCC 24843) (Fission yeast).